We begin with the raw amino-acid sequence, 217 residues long: GrpE protein homolog 1, mitochondrial (217 aa).

The transit peptide at 1-27 directs the protein to the mitochondrion; sequence MAARCVRLARRSLPALALSFRPSPRLL. The segment at 37-56 is disordered; that stretch reads GQNLDEDLGHCEPKTDPPSA. K94 carries the post-translational modification N6-acetyllysine; alternate. K94 is modified (N6-succinyllysine; alternate). Residue K100 is modified to N6-acetyllysine. The residue at position 120 (K120) is an N6-succinyllysine. K215 carries the N6-acetyllysine; alternate modification. K215 carries the N6-succinyllysine; alternate modification.

This sequence belongs to the GrpE family. In terms of assembly, probable component of the PAM complex at least composed of a mitochondrial HSP70 protein, GRPEL1 or GRPEL2, TIMM44, TIMM16/PAM16 and TIMM14/DNAJC19. Binds to HSP70, HSC70 and HSJ1B.

The protein resides in the mitochondrion matrix. Its function is as follows. Essential component of the PAM complex, a complex required for the translocation of transit peptide-containing proteins from the inner membrane into the mitochondrial matrix in an ATP-dependent manner. Seems to control the nucleotide-dependent binding of mitochondrial HSP70 to substrate proteins. The chain is GrpE protein homolog 1, mitochondrial (Grpel1) from Mus musculus (Mouse).